The following is a 194-amino-acid chain: Outer surface 22 kDa lipoprotein (194 aa).

Positions 1-21 (MYKNGFFKNYLSLLLIFLVIA) are cleaved as a signal peptide. C22 is lipidated: N-palmitoyl cysteine. C22 carries S-diacylglycerol cysteine lipidation.

The protein localises to the cell outer membrane. The protein is Outer surface 22 kDa lipoprotein (p22) of Borreliella burgdorferi (strain N40) (Borrelia burgdorferi).